A 298-amino-acid chain; its full sequence is Ribosomal protein uL3 glutamine methyltransferase (298 aa).

Belongs to the protein N5-glutamine methyltransferase family. PrmB subfamily.

The catalysed reaction is L-glutaminyl-[ribosomal protein uL3] + S-adenosyl-L-methionine = N(5)-methyl-L-glutaminyl-[ribosomal protein uL3] + S-adenosyl-L-homocysteine + H(+). Methylates large ribosomal subunit protein uL3 on a specific glutamine residue. This Bordetella pertussis (strain Tohama I / ATCC BAA-589 / NCTC 13251) protein is Ribosomal protein uL3 glutamine methyltransferase.